Reading from the N-terminus, the 105-residue chain is Large ribosomal subunit protein uL24 (105 aa).

This sequence belongs to the universal ribosomal protein uL24 family. Part of the 50S ribosomal subunit.

One of two assembly initiator proteins, it binds directly to the 5'-end of the 23S rRNA, where it nucleates assembly of the 50S subunit. Its function is as follows. One of the proteins that surrounds the polypeptide exit tunnel on the outside of the subunit. The chain is Large ribosomal subunit protein uL24 from Xylella fastidiosa (strain M12).